A 209-amino-acid polypeptide reads, in one-letter code: Large ribosomal subunit protein uL4 (209 aa).

Residues 46 to 71 (GTSSTKTRSEVRGSSKKPWKQKGTGR) are disordered. Residues 59-71 (SSKKPWKQKGTGR) show a composition bias toward basic residues.

It belongs to the universal ribosomal protein uL4 family. As to quaternary structure, part of the 50S ribosomal subunit.

Functionally, one of the primary rRNA binding proteins, this protein initially binds near the 5'-end of the 23S rRNA. It is important during the early stages of 50S assembly. It makes multiple contacts with different domains of the 23S rRNA in the assembled 50S subunit and ribosome. In terms of biological role, forms part of the polypeptide exit tunnel. This chain is Large ribosomal subunit protein uL4, found in Borrelia garinii subsp. bavariensis (strain ATCC BAA-2496 / DSM 23469 / PBi) (Borreliella bavariensis).